The primary structure comprises 688 residues: MATEIDLLRDQKDKLNDILRQHQIEHIFRDPTMQNSMSKGGRGDTLVDSINEQSSLPPLIAEYEKHLEELNRQLTYYQKHMGEMKLQLETVITENERLHSKLKDAVEKQLEALPFGTGIGNDICADDETVRILQEQLQLANQEKTWALELWQTASQELQSVQKLYQEHMTEAQIHEFENRKQKDQLNNFQQLTKKLHVANENIEMTNHHFLKTVTEQNMEIEKLRKHLRQARLDLRVAVSKVEELTKVTEGLQEQMLKKEEDIMSAQGKEEASDRRVQQLQSSIKQLESRLCVAIEEADVLKTGKSNLEKQIKELQAKCSESENEKYEAISRARDSMQLLEEANIKQNQILLEEKQKEVDREKMKKTMSQLIQDAAIKARKEVESTKKQYEILISQLKEELSTLQMDCDEKQGQIDRAIRGKRAVEEELEKIYREGKQDESDYRKLEEMHQRCLAAERSKDDLQLRLKSAENRIKQLEINSSEEMSRSHEMIQKLQTVLESERENCGFVSEQRLKLQQENEQLQKETEDLRKVALEAQKKAKLKVSTMEHQFSIKEHGFEVQLREMEDSNRNSIVELRHLLAAQQKTANRWKEETKKLTESAEMRISSLKSELSRQKLHTQELLSQLEMANEKVAENEKLILEHQEKANRLQRRLSQAEERAASASQQLSVITVQRRKAASMMNLENI.

Ala2 is subject to N-acetylalanine. Coiled coils occupy residues 59 to 108 and 152 to 673; these read LIAE…AVEK and QTAS…SVIT. Ser681 is modified (phosphoserine).

As to quaternary structure, interacts with SCN10A and clathrin. Identified in a complex containing SCN10A, clathrin and SCLT1.

It is found in the cytoplasm. Its subcellular location is the cytoskeleton. The protein localises to the microtubule organizing center. It localises to the centrosome. The protein resides in the centriole. Functionally, adapter protein that links SCN10A to clathrin. Regulates SCN10A channel activity, possibly by promoting channel internalization. The chain is Sodium channel and clathrin linker 1 (Sclt1) from Mus musculus (Mouse).